Consider the following 308-residue polypeptide: Ribosomal RNA large subunit methyltransferase F (308 aa).

This sequence belongs to the methyltransferase superfamily. METTL16/RlmF family.

Its subcellular location is the cytoplasm. It carries out the reaction adenosine(1618) in 23S rRNA + S-adenosyl-L-methionine = N(6)-methyladenosine(1618) in 23S rRNA + S-adenosyl-L-homocysteine + H(+). Specifically methylates the adenine in position 1618 of 23S rRNA. The sequence is that of Ribosomal RNA large subunit methyltransferase F from Escherichia coli (strain SMS-3-5 / SECEC).